A 333-amino-acid chain; its full sequence is Ferredoxin--NADP reductase (333 aa).

The FAD site is built by D32, Q40, Y45, A85, F119, D285, and T326.

This sequence belongs to the ferredoxin--NADP reductase type 2 family. Homodimer. FAD is required as a cofactor.

It carries out the reaction 2 reduced [2Fe-2S]-[ferredoxin] + NADP(+) + H(+) = 2 oxidized [2Fe-2S]-[ferredoxin] + NADPH. In Neorickettsia sennetsu (strain ATCC VR-367 / Miyayama) (Ehrlichia sennetsu), this protein is Ferredoxin--NADP reductase.